Here is a 219-residue protein sequence, read N- to C-terminus: GTP-binding protein Rab-3D (219 aa).

Ala-2 carries the post-translational modification N-acetylalanine. 29-37 provides a ligand contact to GDP; that stretch reads GNSSVGKTS. Residues Ser-31, Ser-32, Val-33, Gly-34, Lys-35, Thr-36, Ser-37, Pro-49, and Ser-53 each coordinate GTP. Thr-36 serves as a coordination point for Mg(2+). The Switch 1 signature appears at 49 to 58; that stretch reads PAFVSTVGID. Residues Thr-54 and Asp-77 each coordinate Mg(2+). Gly-80 serves as a coordination point for GTP. The Switch 2 motif lies at 80-96; it reads GQERYRTITTAYYRGAM. Thr-86 carries the phosphothreonine modification. The GTP site is built by Asn-135, Lys-136, Asp-138, Ala-166, and Lys-167. GDP-binding positions include 135–138 and 165–167; these read NKCD and SAK. A Phosphoserine modification is found at Ser-190. The segment at 190-219 is disordered; it reads SLEPSSSPGSNGKGPALGDTPPPQPSSCGC. Residues 193-203 show a composition bias toward low complexity; the sequence is PSSSPGSNGKG. Residues 209–219 are compositionally biased toward pro residues; it reads TPPPQPSSCGC. 2 S-geranylgeranyl cysteine lipidation sites follow: Cys-217 and Cys-219. The residue at position 219 (Cys-219) is a Cysteine methyl ester; partial.

This sequence belongs to the small GTPase superfamily. Rab family. Interacts with RIMS1, RIMS2, RPH3A and RPH3AL. Interacts with RAB3IP. The GTP-bound form interacts with REP15. Interacts with CHM; phosphorylation at Thr-86 disrupts this interaction. Interacts with MADD (via uDENN domain); the GTP-bound form is preferred for interaction. Mg(2+) is required as a cofactor. In terms of processing, in fetal glands the majority of the proteins are methylated, whereas in neonatal and adult glands, only 50% are methylated. Phosphorylation of Thr-86 in the switch II region by LRRK2 prevents the association of RAB regulatory proteins, including CHM. As to expression, highest levels found in lung.

It is found in the cell membrane. The catalysed reaction is GTP + H2O = GDP + phosphate + H(+). Its activity is regulated as follows. Regulated by guanine nucleotide exchange factors (GEFs) which promote the exchange of bound GDP for free GTP. Regulated by GTPase activating proteins (GAPs) which increase the GTP hydrolysis activity. Inhibited by GDP dissociation inhibitors (GDIs) which prevent Rab-GDP dissociation. Its function is as follows. The small GTPases Rab are key regulators of intracellular membrane trafficking, from the formation of transport vesicles to their fusion with membranes. Rabs cycle between an inactive GDP-bound form and an active GTP-bound form that is able to recruit to membranes different sets of downstream effectors directly responsible for vesicle formation, movement, tethering and fusion. RAB3D may be involved in the insulin-induced exocytosis of GLUT4-containing vesicles in adipocytes. The sequence is that of GTP-binding protein Rab-3D from Rattus norvegicus (Rat).